The sequence spans 166 residues: Ribosome maturation factor RimM (166 aa).

Residues Glu91–Trp163 form the PRC barrel domain.

This sequence belongs to the RimM family. Binds ribosomal protein uS19.

The protein localises to the cytoplasm. Its function is as follows. An accessory protein needed during the final step in the assembly of 30S ribosomal subunit, possibly for assembly of the head region. Essential for efficient processing of 16S rRNA. May be needed both before and after RbfA during the maturation of 16S rRNA. It has affinity for free ribosomal 30S subunits but not for 70S ribosomes. This Sulfurihydrogenibium sp. (strain YO3AOP1) protein is Ribosome maturation factor RimM.